Here is a 212-residue protein sequence, read N- to C-terminus: Pyridoxine/pyridoxamine 5'-phosphate oxidase (212 aa).

Residues 59–64 (RMVLMK), 74–75 (YS), lysine 81, and glutamine 103 contribute to the FMN site. Lysine 64 is a binding site for substrate. Residues tyrosine 121 and arginine 125 each coordinate substrate. Residues 138-139 (QS) and tryptophan 183 each bind FMN. Substrate is bound at residue 189-191 (RLH). Arginine 193 is a binding site for FMN.

The protein belongs to the pyridoxamine 5'-phosphate oxidase family. Homodimer. The cofactor is FMN.

It catalyses the reaction pyridoxamine 5'-phosphate + O2 + H2O = pyridoxal 5'-phosphate + H2O2 + NH4(+). It carries out the reaction pyridoxine 5'-phosphate + O2 = pyridoxal 5'-phosphate + H2O2. Its pathway is cofactor metabolism; pyridoxal 5'-phosphate salvage; pyridoxal 5'-phosphate from pyridoxamine 5'-phosphate: step 1/1. It functions in the pathway cofactor metabolism; pyridoxal 5'-phosphate salvage; pyridoxal 5'-phosphate from pyridoxine 5'-phosphate: step 1/1. In terms of biological role, catalyzes the oxidation of either pyridoxine 5'-phosphate (PNP) or pyridoxamine 5'-phosphate (PMP) into pyridoxal 5'-phosphate (PLP). The polypeptide is Pyridoxine/pyridoxamine 5'-phosphate oxidase (Rhodopseudomonas palustris (strain HaA2)).